The sequence spans 195 residues: Capsid protein (195 aa).

The tract at residues 148–195 (NAPILSTLPETTVVRRRGRSPRRRTPSPRRRRSQSPRRRRSASPASQC) is disordered. A compositionally biased stretch (basic residues) spans 161-188 (VRRRGRSPRRRTPSPRRRRSQSPRRRRS). 3 positions are modified to phosphoserine; by host: Ser-167, Ser-174, and Ser-182. The 1; half-length repeat unit spans residues 167–172 (SPRRRT). The tract at residues 167–188 (SPRRRTPSPRRRRSQSPRRRRS) is 3 X 7 AA repeats of S-P-R-R-R-[PR]-S. The Bipartite nuclear localization signal signature appears at 170–187 (RRTPSPRRRRSQSPRRRR). 2 repeat units span residues 174–180 (SPRRRRS) and 182–188 (SPRRRRS). The tract at residues 189 to 195 (ASPASQC) is RNA binding.

Belongs to the orthohepadnavirus core antigen family. As to quaternary structure, homodimerizes, then multimerizes. Interacts with cytosol exposed regions of viral L glycoprotein present in the reticulum-to-Golgi compartment. Interacts with human FLNB. Phosphorylated form interacts with host importin alpha; this interaction depends on the exposure of the NLS, which itself depends upon genome maturation and/or phosphorylation of the capsid protein. Interacts with host NUP153. In terms of processing, phosphorylated by host SRPK1, SRPK2, and maybe protein kinase C or GAPDH. Phosphorylation is critical for pregenomic RNA packaging. Protein kinase C phosphorylation is stimulated by HBx protein and may play a role in transport of the viral genome to the nucleus at the late step during the viral replication cycle.

It localises to the virion. The protein localises to the host cytoplasm. Its function is as follows. Self assembles to form an icosahedral capsid. Most capsids appear to be large particles with an icosahedral symmetry of T=4 and consist of 240 copies of capsid protein, though a fraction forms smaller T=3 particles consisting of 180 capsid proteins. Entering capsids are transported along microtubules to the nucleus. Phosphorylation of the capsid is thought to induce exposure of nuclear localization signal in the C-terminal portion of the capsid protein that allows binding to the nuclear pore complex via the importin (karyopherin-) alpha and beta. Capsids are imported in intact form through the nuclear pore into the nuclear basket, where it probably binds NUP153. Only capsids that contain the mature viral genome can release the viral DNA and capsid protein into the nucleoplasm. Immature capsids get stuck in the basket. Capsids encapsulate the pre-genomic RNA and the P protein. Pre-genomic RNA is reverse-transcribed into DNA while the capsid is still in the cytoplasm. The capsid can then either be directed to the nucleus, providing more genomes for transcription, or bud through the endoplasmic reticulum to provide new virions. The protein is Capsid protein of Hepatitis B virus genotype G (isolate IG29227/2000) (HBV-G).